The following is a 299-amino-acid chain: S-fimbrial protein subunit SfaH (299 aa).

This sequence belongs to the fimbrial protein family.

It localises to the fimbrium. In terms of biological role, fimbriae (also called pili), polar filaments radiating from the surface of the bacterium to a length of 0.5-1.5 micrometers and numbering 100-300 per cell, enable bacteria to colonize the epithelium of specific host organs. Its function is as follows. A minor fimbrial subunit. This protein is necessary for full expression of S-specific binding. S-fimbrial adhesins enable pathogenic E.coli causing urinary-tract infections or newborn meningitis to attach to glycoproteins terminating with alpha-sialic acid-(2-3)-beta-Gal. This is S-fimbrial protein subunit SfaH (sfaH) from Escherichia coli O6:K15:H31 (strain 536 / UPEC).